A 1823-amino-acid polypeptide reads, in one-letter code: WD repeat-containing protein DDB_G0292056 (1823 aa).

A disordered region spans residues methionine 1–valine 68. Positions threonine 16–asparagine 61 are enriched in low complexity. WD repeat units lie at residues glutamine 138 to leucine 177, serine 182 to lysine 222, serine 228 to asparagine 267, valine 270 to threonine 310, isoleucine 312 to proline 354, and glycine 360 to phenylalanine 405. Disordered stretches follow at residues proline 418–threonine 461, glutamine 530–asparagine 562, asparagine 649–lysine 687, isoleucine 714–glycine 778, isoleucine 805–glutamine 840, isoleucine 883–serine 940, serine 966–arginine 996, asparagine 1014–proline 1058, and glutamine 1122–serine 1186. Composition is skewed to low complexity over residues threonine 419–threonine 432 and leucine 440–threonine 461. 2 stretches are compositionally biased toward low complexity: residues asparagine 654 to asparagine 680 and serine 717 to glutamine 748. 2 stretches are compositionally biased toward polar residues: residues phenylalanine 749–serine 768 and methionine 827–glutamine 840. 4 stretches are compositionally biased toward low complexity: residues asparagine 885–asparagine 926, serine 966–asparagine 993, asparagine 1014–asparagine 1041, and serine 1127–asparagine 1183. The WD 7 repeat unit spans residues alanine 1207–lysine 1250. Disordered regions lie at residues serine 1264–serine 1307, glutamine 1697–asparagine 1725, and proline 1764–asparagine 1823. A compositionally biased stretch (low complexity) spans serine 1282 to serine 1293. Positions methionine 1710–asparagine 1725 are enriched in polar residues.

The polypeptide is WD repeat-containing protein DDB_G0292056 (Dictyostelium discoideum (Social amoeba)).